Consider the following 268-residue polypeptide: MLKAIVTGGGGKMGARIISLLEEEGGMQLTGVVEKKDHPAAGKDIGEFLGSGKRGIVIQSDLGFCIAGGDVIIDFTSHEASMRHMEMAAEHKRPIVIGSTGFSADEMDRIRKFAQNVPCVLAPNMSVGVNVMFKLLKIVAETLGDDYDVEILEVHHRLKKDAPSGTALKMAQVVAEALGRELDEVGIYERKGLIGERSKKEIGIQALRAGDIVGEHTVIFGAVGERLELIHRAHSRDNFARGAIRAAKWVVRQEPGLYDMQDVLGFRS.

Residues 8–13 (GGGGKM) and glutamate 34 contribute to the NAD(+) site. Lysine 35 provides a ligand contact to NADP(+). NAD(+) is bound by residues 98-100 (GST) and 122-125 (APNM). Histidine 155 (proton donor/acceptor) is an active-site residue. (S)-2,3,4,5-tetrahydrodipicolinate is bound at residue histidine 156. The Proton donor role is filled by lysine 159. 165-166 (GT) contacts (S)-2,3,4,5-tetrahydrodipicolinate.

It belongs to the DapB family.

It localises to the cytoplasm. It catalyses the reaction (S)-2,3,4,5-tetrahydrodipicolinate + NAD(+) + H2O = (2S,4S)-4-hydroxy-2,3,4,5-tetrahydrodipicolinate + NADH + H(+). The catalysed reaction is (S)-2,3,4,5-tetrahydrodipicolinate + NADP(+) + H2O = (2S,4S)-4-hydroxy-2,3,4,5-tetrahydrodipicolinate + NADPH + H(+). It functions in the pathway amino-acid biosynthesis; L-lysine biosynthesis via DAP pathway; (S)-tetrahydrodipicolinate from L-aspartate: step 4/4. Functionally, catalyzes the conversion of 4-hydroxy-tetrahydrodipicolinate (HTPA) to tetrahydrodipicolinate. This is 4-hydroxy-tetrahydrodipicolinate reductase from Syntrophus aciditrophicus (strain SB).